We begin with the raw amino-acid sequence, 316 residues long: MSEQVYLDLARTILEEGHYKGDRTNTGTYSLFGYQMRFNLQEGFPLLTTKKMPFGLIKSELLWFLKGDSNIRYLLQHNNHIWDEWAFERFVKSTDYTGPDMTDFSHRAQDDADFKVVYQEQMRLFNDRILADEGFAKQYGELGDIYGKQWRAWQTRSGETIDQIKNVIEMIKTNPDSRRLIVSAWNPEDVPSMALPPCHTMFQFYVNDGKLSCQLYQRSGDVFLGVPFNIASYALLTHLIAHETGLEVGEFIHTLGDAHIYSNHVTQVKTQLARSMHAAPKLWLNPDKKSIFDFDVADIKVENYESEPAIKAPVAV.

Residues arginine 23 and 178–179 (RR) each bind dUMP. The Nucleophile role is filled by cysteine 198. DUMP is bound by residues 218–221 (RSGD), asparagine 229, and 259–261 (HIY). Residue aspartate 221 coordinates (6R)-5,10-methylene-5,6,7,8-tetrahydrofolate. Residue alanine 315 coordinates (6R)-5,10-methylene-5,6,7,8-tetrahydrofolate.

The protein belongs to the thymidylate synthase family. Bacterial-type ThyA subfamily. In terms of assembly, homodimer.

Its subcellular location is the cytoplasm. It catalyses the reaction dUMP + (6R)-5,10-methylene-5,6,7,8-tetrahydrofolate = 7,8-dihydrofolate + dTMP. The protein operates within pyrimidine metabolism; dTTP biosynthesis. Its function is as follows. Catalyzes the reductive methylation of 2'-deoxyuridine-5'-monophosphate (dUMP) to 2'-deoxythymidine-5'-monophosphate (dTMP) while utilizing 5,10-methylenetetrahydrofolate (mTHF) as the methyl donor and reductant in the reaction, yielding dihydrofolate (DHF) as a by-product. This enzymatic reaction provides an intracellular de novo source of dTMP, an essential precursor for DNA biosynthesis. The chain is Thymidylate synthase from Latilactobacillus sakei subsp. sakei (strain 23K) (Lactobacillus sakei subsp. sakei).